The sequence spans 81 residues: Sec-independent protein translocase protein TatA (81 aa).

The helical transmembrane segment at 1-21 (MGMPSGQELLIILAIVVLLFG) threads the bilayer. Positions 45 to 81 (NEDDDTEVKSASTEAPKKVESAEEVASKESSKTPTQA) are disordered. The span at 59 to 75 (APKKVESAEEVASKESS) shows a compositional bias: basic and acidic residues.

Belongs to the TatA/E family. In terms of assembly, the Tat system comprises two distinct complexes: a TatABC complex, containing multiple copies of TatA, TatB and TatC subunits, and a separate TatA complex, containing only TatA subunits. Substrates initially bind to the TatABC complex, which probably triggers association of the separate TatA complex to form the active translocon.

Its subcellular location is the cell inner membrane. Part of the twin-arginine translocation (Tat) system that transports large folded proteins containing a characteristic twin-arginine motif in their signal peptide across membranes. TatA could form the protein-conducting channel of the Tat system. This is Sec-independent protein translocase protein TatA from Sulfurimonas denitrificans (strain ATCC 33889 / DSM 1251) (Thiomicrospira denitrificans (strain ATCC 33889 / DSM 1251)).